A 657-amino-acid polypeptide reads, in one-letter code: Probable cobalt/nickel-exporting P-type ATPase (657 aa).

The next 5 helical transmembrane spans lie at 40-60 (WATVALLLFLAGLVAQLNGAP), 62-82 (AMWWTLYLACYLAGGWGSAWA), 101-121 (AAVGAVAIGQIFDGALLIVIF), 268-288 (LGMVAATLALIVIPLMFGADL), and 299-319 (MIVASPCAVVLATMPPLLSAI). Residue Asp347 is the 4-aspartylphosphate intermediate of the active site. Positions 543 and 547 each coordinate Mg(2+). Residues 596–618 (VVTVNLAIAATFIAVLVLWDLFG) form a helical membrane-spanning segment.

The protein belongs to the cation transport ATPase (P-type) (TC 3.A.3) family. Type IB subfamily.

Its subcellular location is the cell membrane. Involved in heavy metal homeostasis. Probably exports nickel and cobalt ions out of the cell. This is Probable cobalt/nickel-exporting P-type ATPase (ctpD) from Mycobacterium bovis (strain ATCC BAA-935 / AF2122/97).